Consider the following 295-residue polypeptide: GTP-binding protein GEM (295 aa).

Residues 39 to 64 form a disordered region; that stretch reads CNLRNRHSTAPEEHCRRSWSSDSTDS. GTP contacts are provided by residues 81 to 88 and 190 to 193; these read GEQGVGKS and NKSD. The calmodulin-binding stretch occupies residues 265–284; it reads ARRFWGKIVAKNNKNMAFKL.

It belongs to the small GTPase superfamily. RGK family. Interacts with calmodulin in a Ca(2+)-dependent manner. Calmodulin binding significantly decreases GTP binding. Binds ROCK1. Phosphorylated on tyrosine residues.

It localises to the cell membrane. In terms of biological role, could be a regulatory protein, possibly participating in receptor-mediated signal transduction at the plasma membrane. Has guanine nucleotide-binding activity but undetectable intrinsic GTPase activity. The protein is GTP-binding protein GEM (Gem) of Mus musculus (Mouse).